Here is a 492-residue protein sequence, read N- to C-terminus: Catalase (492 aa).

Residues His-65 and Asn-138 contribute to the active site. A heme-binding site is contributed by Tyr-348.

It belongs to the catalase family. Homotetramer. Heme serves as cofactor.

The protein localises to the cytoplasm. It is found in the cytosol. The protein resides in the peroxisome matrix. The catalysed reaction is 2 H2O2 = O2 + 2 H2O. In terms of biological role, catalyzes the degradation of hydrogen peroxide (H(2)O(2)) generated by peroxisomal oxidases to water and oxygen, thereby protecting cells from the toxic effects of hydrogen peroxide. This chain is Catalase, found in Helianthus annuus (Common sunflower).